Reading from the N-terminus, the 541-residue chain is Beta-hexosaminidase 1 (541 aa).

Residues 1–20 (MSTNLLRLILLFITLSITSS) form the signal peptide. N-linked (GlcNAc...) asparagine glycans are attached at residues N44 and N304. The cysteines at positions 295 and 337 are disulfide-linked. E332 (proton donor) is an active-site residue. 3 N-linked (GlcNAc...) asparagine glycosylation sites follow: N340, N352, and N497. C511 and C538 are oxidised to a cystine.

Belongs to the glycosyl hydrolase 20 family. N-glycosylated. In terms of tissue distribution, expressed in roots, leaves, stems, flowers and siliques.

It localises to the vacuole. The enzyme catalyses Hydrolysis of terminal non-reducing N-acetyl-D-hexosamine residues in N-acetyl-beta-D-hexosaminides.. With respect to regulation, inhibited by N-acetylcastanospermine, 2-acet-amido-1,2-dideoxynojirimycin and PUGNAc. Its function is as follows. Has a broad substrate specificity. Can use synthetic substrates such as pyridylaminated chitotriose, pyridylaminated chitobiose, p-nitrophenyl-beta-N-acetylglucosaminide, p-nitrophenyl-2-acetamido-2-deoxy-beta-D-glucopyranoside (pNP-GlcNAc), p-nitrophenyl-2-acetamido-2-deoxy-beta-D-galactopyranoside (pNP-GalNAc), 4-methylumbelliferyl-2-acetamido-2-deoxy-beta-D-glucopyranoside (MU-GlcNAc), and 4-methylumbelliferyl-6-sulfo-2-acetamido-2-deoxy-beta-D-glucopyranoside (MU-GlcNAc-6SO(4)) as substrates. Removes terminal GlcNAc residues from alpha1,3- and alpha1,6-mannosyl branches of biantennary N-glycans without any strict branch preference. Required for the presence of paucimannosidic N-glycans in glycoproteins of roots and, to a lower extent, of leaves. The chain is Beta-hexosaminidase 1 (HEXO1) from Arabidopsis thaliana (Mouse-ear cress).